Consider the following 1040-residue polypeptide: Multidrug resistance protein MdtB (1040 aa).

12 helical membrane-spanning segments follow: residues 16–36, 347–367, 369–389, 396–416, 440–460, 472–492, 537–557, 863–883, 888–908, 911–931, 968–988, and 998–1018; these read FILR…AGII, LMLA…NIPA, IIPA…MVFL, LTLM…IVVI, IGFT…PLLF, FAVT…TLTP, WLTL…WIFI, LGST…VLGV, FIHP…ALLA, IAGA…IGIV, ILMT…STGV, and IGMV…TPVI.

The protein belongs to the resistance-nodulation-cell division (RND) (TC 2.A.6) family. MdtB subfamily. In terms of assembly, part of a tripartite efflux system composed of MdtA, MdtB and MdtC. MdtB forms a heteromultimer with MdtC.

The protein localises to the cell inner membrane. This Cronobacter sakazakii (strain ATCC BAA-894) (Enterobacter sakazakii) protein is Multidrug resistance protein MdtB.